A 499-amino-acid chain; its full sequence is Glutamyl-tRNA(Gln) amidotransferase subunit A (499 aa).

Residues K75 and S150 each act as charge relay system in the active site. Catalysis depends on S174, which acts as the Acyl-ester intermediate.

The protein belongs to the amidase family. GatA subfamily. Heterotrimer of A, B and C subunits.

The enzyme catalyses L-glutamyl-tRNA(Gln) + L-glutamine + ATP + H2O = L-glutaminyl-tRNA(Gln) + L-glutamate + ADP + phosphate + H(+). Its function is as follows. Allows the formation of correctly charged Gln-tRNA(Gln) through the transamidation of misacylated Glu-tRNA(Gln) in organisms which lack glutaminyl-tRNA synthetase. The reaction takes place in the presence of glutamine and ATP through an activated gamma-phospho-Glu-tRNA(Gln). The chain is Glutamyl-tRNA(Gln) amidotransferase subunit A from Ralstonia pickettii (strain 12J).